We begin with the raw amino-acid sequence, 475 residues long: Adenosylhomocysteinase (475 aa).

Positions 60, 133, and 198 each coordinate substrate. 199–201 contacts NAD(+); the sequence is TTT. Substrate-binding residues include K228 and D232. NAD(+) contacts are provided by residues N233, 262 to 267, E285, N320, 341 to 343, and N389; these read GYGDVG and IGH.

It belongs to the adenosylhomocysteinase family. NAD(+) serves as cofactor.

The protein localises to the cytoplasm. The catalysed reaction is S-adenosyl-L-homocysteine + H2O = L-homocysteine + adenosine. It participates in amino-acid biosynthesis; L-homocysteine biosynthesis; L-homocysteine from S-adenosyl-L-homocysteine: step 1/1. Functionally, may play a key role in the regulation of the intracellular concentration of adenosylhomocysteine. This is Adenosylhomocysteinase from Syntrophotalea carbinolica (strain DSM 2380 / NBRC 103641 / GraBd1) (Pelobacter carbinolicus).